A 630-amino-acid polypeptide reads, in one-letter code: 1-deoxy-D-xylulose-5-phosphate synthase (630 aa).

Thiamine diphosphate contacts are provided by residues histidine 72 and glycine 113–serine 115. Position 144 (aspartate 144) interacts with Mg(2+). Residues glycine 145–alanine 146, asparagine 173, tyrosine 284, and glutamate 367 each bind thiamine diphosphate. A Mg(2+)-binding site is contributed by asparagine 173.

The protein belongs to the transketolase family. DXPS subfamily. As to quaternary structure, homodimer. It depends on Mg(2+) as a cofactor. Thiamine diphosphate is required as a cofactor.

It carries out the reaction D-glyceraldehyde 3-phosphate + pyruvate + H(+) = 1-deoxy-D-xylulose 5-phosphate + CO2. Its pathway is metabolic intermediate biosynthesis; 1-deoxy-D-xylulose 5-phosphate biosynthesis; 1-deoxy-D-xylulose 5-phosphate from D-glyceraldehyde 3-phosphate and pyruvate: step 1/1. Catalyzes the acyloin condensation reaction between C atoms 2 and 3 of pyruvate and glyceraldehyde 3-phosphate to yield 1-deoxy-D-xylulose-5-phosphate (DXP). The sequence is that of 1-deoxy-D-xylulose-5-phosphate synthase from Geobacillus thermodenitrificans (strain NG80-2).